The sequence spans 873 residues: Zinc fingers and homeoboxes protein 1 (873 aa).

The disordered stretch occupies residues 24 to 63 (LISDLDEGPPVLTPVENTRAESISSDEEVHESVDSDNQQN). T36 carries the phosphothreonine modification. A phosphoserine mark is found at S45, S47, and S48. 2 consecutive C2H2-type zinc fingers follow at residues 70 to 93 (YECKYCTFQTPDLNMFTFHVDSEH) and 102 to 125 (YVCVECNFLTKRYDALSEHNLKYH). K159 participates in a covalent cross-link: Glycyl lysine isopeptide (Lys-Gly) (interchain with G-Cter in SUMO2). The tract at residues 200-236 (HNSVEDVPEEKENEIKPDREEIVENPSSSASESNTST) is disordered. The residue at position 202 (S202) is a Phosphoserine. Residues 212–221 (NEIKPDREEI) show a composition bias toward basic and acidic residues. The span at 223–236 (ENPSSSASESNTST) shows a compositional bias: low complexity. A required for dimerization region spans residues 272 to 432 (NSNLIPKVLI…QNNIQKSQVP (161 aa)). Positions 272–564 (NSNLIPKVLI…AQPKQSWNPF (293 aa)) are required for interaction with NFYA. The homeobox 1 DNA-binding region spans 284 to 346 (NSIPTYNAAL…LKHGVSWTPE (63 aa)). Glycyl lysine isopeptide (Lys-Gly) (interchain with G-Cter in SUMO2) cross-links involve residues K441, K454, K485, and K629. 2 DNA-binding regions (homeobox) span residues 464–526 (SFGI…KSNQ) and 569–630 (PQKF…EEKM). 2 disordered regions span residues 626-667 (KEEK…ICKK) and 732-769 (SSMNGLSSLRKRGRGRPKGRGRGRPRGRPRGSKRINNW). S648 bears the Phosphoserine mark. A DNA-binding region (homeobox 4) is located at residues 660-722 (STGKICKKTP…YAWKNGNLKW (63 aa)). Positions 734 to 768 (MNGLSSLRKRGRGRPKGRGRGRPRGRPRGSKRINN) are required for nuclear localization. Residues 740–764 (LRKRGRGRPKGRGRGRPRGRPRGSK) show a composition bias toward basic residues. Phosphoserine is present on S774. Residues 777 to 832 (KFKTGTAILKDYYLKHKFLNEQDLDELVNKSHMGYEQVREWFAERQRRSELGIELF) constitute a DNA-binding region (homeobox 5). The interval 829–873 (IELFEENEEEDEVIDDQEEDEEETDDSDTWEPPRHVKRKLSKSDD) is disordered. The segment covering 831-857 (LFEENEEEDEVIDDQEEDEEETDDSDT) has biased composition (acidic residues). Residues 831–873 (LFEENEEEDEVIDDQEEDEEETDDSDTWEPPRHVKRKLSKSDD) form a required for repressor activity region. Over residues 863–873 (HVKRKLSKSDD) the composition is skewed to basic residues.

Belongs to the ZHX family. As to quaternary structure, forms homodimers. Heterodimer (via HD1 domain) with ZHX2 (via HD1 domain). Also forms a heterodimer with ZHX3 which is a prerequisite for repressor activity. Interacts with ATF7IP and NFYA. Interacts (via homeobox domains) with DNMT3B (via PWWP domain).

It localises to the nucleus. Functionally, acts as a transcriptional repressor. Increases DNMT3B-mediated repressive transcriptional activity when DNMT3B is tethered to DNA. May link molecule between DNMT3B and other co-repressor proteins. This chain is Zinc fingers and homeoboxes protein 1 (ZHX1), found in Pan troglodytes (Chimpanzee).